The chain runs to 152 residues: Dehydratase aurZ (152 aa).

The EthD domain occupies 34–129 (PSLSEKEYRH…APDHVNFADT (96 aa)).

This sequence belongs to the tpcK family.

It carries out the reaction naphtopyrone YWA1 = norrubrofusarin + H2O + H(+). Its pathway is pigment biosynthesis. Functionally, dehydratase; part of the gene cluster that mediates the biosynthesis of aurofusarin, a red mycelium pigment which is acting as a mycotoxin. The first step is performed by the polyketide synthase which condenses one acetyl-CoA and 6 malonyl-CoA units to form the first intermediate, the cyclic heptaketide and yellow pigment YWA1. The C2 hydroxyl group in the pyrone ring of YWA1 is probably formed during ring closure by an aldol-type cyclization reaction. The dehydratase aurZ then acts as the first tailoring enzyme in the aurofusarin biosynthetic pathway by converting YWA1 to nor-rubrofusarin. Nor-rubrofusarin is then methylated to rubrofusarin by the O-methyltransferase aurJ. Rubrofusarin is then transported across the plasma membrane by the rubrofusarin-specific pump aurT for further enzymatic processing by the extracellular complex composed of GIP1, aurF, aurO and aurS to yield aurofusarin. This chain is Dehydratase aurZ, found in Gibberella zeae (strain ATCC MYA-4620 / CBS 123657 / FGSC 9075 / NRRL 31084 / PH-1) (Wheat head blight fungus).